Reading from the N-terminus, the 381-residue chain is (S)-scoulerine 9-O-methyltransferase (381 aa).

Gly223, Glu246, Asp266, Met267, and Lys280 together coordinate S-adenosyl-L-methionine. Catalysis depends on His284, which acts as the Proton acceptor.

This sequence belongs to the class I-like SAM-binding methyltransferase superfamily. Cation-independent O-methyltransferase family. COMT subfamily.

It catalyses the reaction (S)-scoulerine + S-adenosyl-L-methionine = (S)-tetrahydrocolumbamine + S-adenosyl-L-homocysteine + H(+). Produces a precursor of protoberberine alkaloids. This is (S)-scoulerine 9-O-methyltransferase (SMT) from Coptis japonica (Japanese goldthread).